Reading from the N-terminus, the 465-residue chain is Cysteine--tRNA ligase (465 aa).

Cys29 lines the Zn(2+) pocket. Residues Pro31–Asn41 carry the 'HIGH' region motif. Positions 209, 234, and 238 each coordinate Zn(2+). Residues Lys266–Ser270 carry the 'KMSKS' region motif. Lys269 is an ATP binding site. Residue Ser270 is modified to Phosphoserine.

This sequence belongs to the class-I aminoacyl-tRNA synthetase family. As to quaternary structure, monomer. Requires Zn(2+) as cofactor.

It localises to the cytoplasm. It carries out the reaction tRNA(Cys) + L-cysteine + ATP = L-cysteinyl-tRNA(Cys) + AMP + diphosphate. The protein is Cysteine--tRNA ligase of Bacillus cereus (strain G9842).